Here is a 356-residue protein sequence, read N- to C-terminus: Vesicular integral-membrane protein VIP36 (356 aa).

A signal peptide spans 1–44; it reads MAAEGWIWRWGWGRRCLGRPGLLGPGPGPTTPLFLLLLLGSVTA. Over 45–322 the chain is Lumenal; that stretch reads DITDGNSEHL…FRSGPLTGWR (278 aa). Residues 52 to 276 enclose the L-type lectin-like domain; the sequence is EHLKREHSLI…DIISMKLFQL (225 aa). A carbohydrate contacts are provided by serine 96 and aspartate 131. Positions 162, 164, and 166 each coordinate Ca(2+). 164-166 provides a ligand contact to a carbohydrate; sequence YPN. N-linked (GlcNAc...) asparagine glycosylation occurs at asparagine 183. Position 190 (histidine 190) interacts with a carbohydrate. Aspartate 193 provides a ligand contact to Ca(2+). An intrachain disulfide couples cysteine 202 to cysteine 239. Residue 260-262 participates in a carbohydrate binding; it reads GDL. A helical membrane pass occupies residues 323 to 345; sequence VFLLLLCALLGIVVCAVVGAVVF. Residues 346-356 are Cytoplasmic-facing; sequence QKRQERNKRFY.

It depends on Ca(2+) as a cofactor. As to expression, ubiquitous.

It localises to the endoplasmic reticulum-Golgi intermediate compartment membrane. It is found in the golgi apparatus membrane. The protein resides in the endoplasmic reticulum membrane. Functionally, plays a role as an intracellular lectin in the early secretory pathway. Interacts with N-acetyl-D-galactosamine and high-mannose type glycans and may also bind to O-linked glycans. Involved in the transport and sorting of glycoproteins carrying high mannose-type glycans. This chain is Vesicular integral-membrane protein VIP36 (LMAN2), found in Homo sapiens (Human).